A 258-amino-acid polypeptide reads, in one-letter code: Imidazole glycerol phosphate synthase subunit HisF (258 aa).

Active-site residues include Asp11 and Asp130.

The protein belongs to the HisA/HisF family. As to quaternary structure, heterodimer of HisH and HisF.

Its subcellular location is the cytoplasm. The catalysed reaction is 5-[(5-phospho-1-deoxy-D-ribulos-1-ylimino)methylamino]-1-(5-phospho-beta-D-ribosyl)imidazole-4-carboxamide + L-glutamine = D-erythro-1-(imidazol-4-yl)glycerol 3-phosphate + 5-amino-1-(5-phospho-beta-D-ribosyl)imidazole-4-carboxamide + L-glutamate + H(+). It functions in the pathway amino-acid biosynthesis; L-histidine biosynthesis; L-histidine from 5-phospho-alpha-D-ribose 1-diphosphate: step 5/9. Its function is as follows. IGPS catalyzes the conversion of PRFAR and glutamine to IGP, AICAR and glutamate. The HisF subunit catalyzes the cyclization activity that produces IGP and AICAR from PRFAR using the ammonia provided by the HisH subunit. The chain is Imidazole glycerol phosphate synthase subunit HisF from Haemophilus influenzae (strain PittEE).